The sequence spans 267 residues: Undecaprenyl-diphosphatase (267 aa).

A run of 7 helical transmembrane segments spans residues 39–59 (QGLA…ILYF), 87–107 (WMIA…KDFI), 111–131 (LRSA…LWWV), 149–169 (ALFI…RSGA), 189–209 (FLMS…KLVT), 218–238 (ALSI…HAFL), and 244–264 (VGMM…IAFL).

Belongs to the UppP family.

It is found in the cell inner membrane. The enzyme catalyses di-trans,octa-cis-undecaprenyl diphosphate + H2O = di-trans,octa-cis-undecaprenyl phosphate + phosphate + H(+). Its function is as follows. Catalyzes the dephosphorylation of undecaprenyl diphosphate (UPP). Confers resistance to bacitracin. The chain is Undecaprenyl-diphosphatase from Photobacterium profundum (strain SS9).